The following is a 1122-amino-acid chain: Histidine kinase CKI1 (1122 aa).

Topologically, residues 1–12 are cytoplasmic; sequence MMVKVTKLVASR. The chain crosses the membrane as a helical span at residues 13–33; the sequence is PIVVFCVLAFLVVVFECIWIS. Topologically, residues 34–345 are extracellular; sequence NWRTTTENLV…KHQAEKAKYQ (312 aa). The helical transmembrane segment at 346 to 366 threads the bilayer; it reads LIVVMIFLGFGWPVWFVWFMM. Residues 367 to 1122 lie on the Cytoplasmic side of the membrane; the sequence is QATRREMHMR…VIREIESKRH (756 aa). Residues 402–671 form the Histidine kinase domain; that stretch reads NASHDIRGAL…CFQFNVLLTT (270 aa). Residue histidine 405 is modified to Phosphohistidine; by autocatalysis. Basic and acidic residues predominate over residues 918–928; sequence AERSPKHKVQE. Residues 918–981 are disordered; the sequence is AERSPKHKVQ…QETSKPSDDE (64 aa). Residues 987-1120 enclose the Response regulatory domain; the sequence is RVLVVDDNFI…ANVIREIESK (134 aa). Residue aspartate 1050 is modified to 4-aspartylphosphate.

Homodimer. Interacts with AHP2 and AHP3. In terms of tissue distribution, expressed in vascular tissues of inflorescence stems and floral organs, especially in procambium cells, and in siliques.

The protein localises to the cell membrane. It carries out the reaction ATP + protein L-histidine = ADP + protein N-phospho-L-histidine.. In terms of biological role, essential protein. Functions as a histidine kinase and transmits the stress signal to a downstream MAPK cascade. This protein undergoes an ATP-dependent autophosphorylation at a conserved histidine residue in the kinase core, and a phosphoryl group is then transferred to a conserved aspartate residue in the receiver domain. Required for the development of megagametophyte in female gametophyte (embryo sac) independently of cytokinin. Contributes to vascular bundle formation and secondary growth in a cytokinin-independent manner, probably by promoting the maintenance of mitotic activity and/or identity of procambial cells. Seems to influence and promote the cytokinin signaling pathway. The protein is Histidine kinase CKI1 (CKI1) of Arabidopsis thaliana (Mouse-ear cress).